A 240-amino-acid chain; its full sequence is Probable septum site-determining protein MinC (240 aa).

It belongs to the MinC family. Interacts with MinD and FtsZ.

Its function is as follows. Cell division inhibitor that blocks the formation of polar Z ring septums. Rapidly oscillates between the poles of the cell to destabilize FtsZ filaments that have formed before they mature into polar Z rings. Prevents FtsZ polymerization. The chain is Probable septum site-determining protein MinC from Acinetobacter baumannii (strain ACICU).